The following is a 199-amino-acid chain: uncharacterized protein (199 aa).

Positions 72 to 116 (EIYSEIENEESDIEEMSEEMKAFFAKTQEHRQKLKEQRAAEKRKE) form a coiled coil. Residues 98–117 (TQEHRQKLKEQRAAEKRKEG) are compositionally biased toward basic and acidic residues. Residues 98–127 (TQEHRQKLKEQRAAEKRKEGQSSSKSQEEY) are disordered.

This is an uncharacterized protein from Caenorhabditis elegans.